Reading from the N-terminus, the 652-residue chain is Na(+)/H(+) antiporter NhaA 1 (652 aa).

The interval Met1 to Val427 is na(+)/H(+) antiporter NhaA. A run of 11 helical transmembrane segments spans residues Ala27–Leu47, Leu78–Val98, Thr114–Phe134, Val142–Leu162, Phe173–Tyr193, Thr200–Gly220, Leu227–Val247, Leu312–Ala332, Val343–Ala363, Trp376–Ile396, and Ile411–Ala431. One can recognise a Thioredoxin domain in the interval Phe428–Ala623. A disordered region spans residues Arg626–Thr652. A compositionally biased stretch (basic and acidic residues) spans Arg628 to Gly642.

It in the N-terminal section; belongs to the NhaA Na(+)/H(+) (TC 2.A.33) antiporter family.

It is found in the cell membrane. It catalyses the reaction Na(+)(in) + 2 H(+)(out) = Na(+)(out) + 2 H(+)(in). Na(+)/H(+) antiporter that extrudes sodium in exchange for external protons. This chain is Na(+)/H(+) antiporter NhaA 1, found in Salinispora arenicola (strain CNS-205).